The primary structure comprises 388 residues: Alanine racemase (388 aa).

Residue K40 is the Proton acceptor; specific for D-alanine of the active site. Position 40 is an N6-(pyridoxal phosphate)lysine (K40). R137 lines the substrate pocket. Y269 serves as the catalytic Proton acceptor; specific for L-alanine. M318 contacts substrate.

This sequence belongs to the alanine racemase family. Pyridoxal 5'-phosphate serves as cofactor.

It carries out the reaction L-alanine = D-alanine. The protein operates within amino-acid biosynthesis; D-alanine biosynthesis; D-alanine from L-alanine: step 1/1. In terms of biological role, catalyzes the interconversion of L-alanine and D-alanine. May also act on other amino acids. In Halalkalibacterium halodurans (strain ATCC BAA-125 / DSM 18197 / FERM 7344 / JCM 9153 / C-125) (Bacillus halodurans), this protein is Alanine racemase (alr).